The chain runs to 342 residues: N-acetyl-gamma-glutamyl-phosphate reductase (342 aa).

Residue C148 is part of the active site.

The protein belongs to the NAGSA dehydrogenase family. Type 1 subfamily.

It localises to the cytoplasm. It carries out the reaction N-acetyl-L-glutamate 5-semialdehyde + phosphate + NADP(+) = N-acetyl-L-glutamyl 5-phosphate + NADPH + H(+). Its pathway is amino-acid biosynthesis; L-arginine biosynthesis; N(2)-acetyl-L-ornithine from L-glutamate: step 3/4. Functionally, catalyzes the NADPH-dependent reduction of N-acetyl-5-glutamyl phosphate to yield N-acetyl-L-glutamate 5-semialdehyde. This Methanococcus vannielii (strain ATCC 35089 / DSM 1224 / JCM 13029 / OCM 148 / SB) protein is N-acetyl-gamma-glutamyl-phosphate reductase.